The chain runs to 63 residues: MKAQDLREKNVEELNEELLNLLREQFNLRMQAATGQLQQTHTLKAVRRDIARVKTLLNEKAGA.

This sequence belongs to the universal ribosomal protein uL29 family.

In Aliivibrio fischeri (strain ATCC 700601 / ES114) (Vibrio fischeri), this protein is Large ribosomal subunit protein uL29.